Here is a 406-residue protein sequence, read N- to C-terminus: Phosphatidylserine decarboxylase proenzyme, mitochondrial (406 aa).

A mitochondrion-targeting transit peptide spans 1 to 49; sequence MAVAGGRGCVRSLREGVLWRSSPCHCDYTATRHFLGALQKLPLQAWVRK. Topologically, residues 50–60 are mitochondrial matrix; the sequence is VHTAPLRTLFL. Residues 61-79 traverse the membrane as a helical segment; sequence LRPVPILLAAGGGYAGYRQ. Topologically, residues 80–406 are mitochondrial intermembrane; that stretch reads YEKYRERQLE…ILFGEALGSL (327 aa). Catalysis depends on charge relay system; for autoendoproteolytic cleavage activity residues D188, H264, and S375. S375 acts as the Schiff-base intermediate with substrate; via pyruvic acid; for decarboxylase activity in catalysis. A Pyruvic acid (Ser); by autocatalysis modification is found at S375.

It belongs to the phosphatidylserine decarboxylase family. PSD-B subfamily. Eukaryotic type I sub-subfamily. In terms of assembly, heterodimer of a large membrane-associated beta subunit and a small pyruvoyl-containing alpha subunit. Requires pyruvate as cofactor. In terms of processing, is synthesized initially as an inactive proenzyme. Formation of the active enzyme involves a self-maturation process in which the active site pyruvoyl group is generated from an internal serine residue via an autocatalytic post-translational modification. Two non-identical subunits are generated from the proenzyme in this reaction, and the pyruvate is formed at the N-terminus of the alpha chain, which is derived from the carboxyl end of the proenzyme. The autoendoproteolytic cleavage occurs by a canonical serine protease mechanism, in which the side chain hydroxyl group of the serine supplies its oxygen atom to form the C-terminus of the beta chain, while the remainder of the serine residue undergoes an oxidative deamination to produce ammonia and the pyruvoyl prosthetic group on the alpha chain. During this reaction, the Ser that is part of the protease active site of the proenzyme becomes the pyruvoyl prosthetic group, which constitutes an essential element of the active site of the mature decarboxylase.

The protein localises to the mitochondrion inner membrane. The protein resides in the cytoplasm. It is found in the lipid droplet. The catalysed reaction is a 1,2-diacyl-sn-glycero-3-phospho-L-serine + H(+) = a 1,2-diacyl-sn-glycero-3-phosphoethanolamine + CO2. It functions in the pathway phospholipid metabolism; phosphatidylethanolamine biosynthesis. With respect to regulation, inhibited by hydroxylamine. Functionally, catalyzes the formation of phosphatidylethanolamine (PtdEtn) from phosphatidylserine (PtdSer). Plays a central role in phospholipid metabolism and in the interorganelle trafficking of phosphatidylserine. May be involved in lipid droplet biogenesis at the endoplasmic reticulum membrane. This Rattus norvegicus (Rat) protein is Phosphatidylserine decarboxylase proenzyme, mitochondrial.